Here is a 396-residue protein sequence, read N- to C-terminus: 1-deoxy-D-xylulose 5-phosphate reductoisomerase (396 aa).

NADPH contacts are provided by T15, G16, S17, I18, G41, and N129. K130 serves as a coordination point for 1-deoxy-D-xylulose 5-phosphate. Residue E131 participates in NADPH binding. D155 contributes to the Mn(2+) binding site. Residues S156, E157, S182, and H205 each contribute to the 1-deoxy-D-xylulose 5-phosphate site. E157 is a binding site for Mn(2+). An NADPH-binding site is contributed by G211. Positions 218, 223, 224, and 227 each coordinate 1-deoxy-D-xylulose 5-phosphate. E227 is a binding site for Mn(2+).

It belongs to the DXR family. Requires Mg(2+) as cofactor. The cofactor is Mn(2+).

It carries out the reaction 2-C-methyl-D-erythritol 4-phosphate + NADP(+) = 1-deoxy-D-xylulose 5-phosphate + NADPH + H(+). The protein operates within isoprenoid biosynthesis; isopentenyl diphosphate biosynthesis via DXP pathway; isopentenyl diphosphate from 1-deoxy-D-xylulose 5-phosphate: step 1/6. Functionally, catalyzes the NADPH-dependent rearrangement and reduction of 1-deoxy-D-xylulose-5-phosphate (DXP) to 2-C-methyl-D-erythritol 4-phosphate (MEP). This Xanthomonas campestris pv. campestris (strain 8004) protein is 1-deoxy-D-xylulose 5-phosphate reductoisomerase.